We begin with the raw amino-acid sequence, 182 residues long: Protein GrpE (182 aa).

The segment at 1–37 is disordered; the sequence is MSDSSKERKKKFTGMVNKQKSEDQQNNSKQADDLDEL.

Belongs to the GrpE family. Homodimer.

The protein localises to the cytoplasm. Its function is as follows. Participates actively in the response to hyperosmotic and heat shock by preventing the aggregation of stress-denatured proteins, in association with DnaK and GrpE. It is the nucleotide exchange factor for DnaK and may function as a thermosensor. Unfolded proteins bind initially to DnaJ; upon interaction with the DnaJ-bound protein, DnaK hydrolyzes its bound ATP, resulting in the formation of a stable complex. GrpE releases ADP from DnaK; ATP binding to DnaK triggers the release of the substrate protein, thus completing the reaction cycle. Several rounds of ATP-dependent interactions between DnaJ, DnaK and GrpE are required for fully efficient folding. The chain is Protein GrpE from Wolbachia sp. subsp. Brugia malayi (strain TRS).